The following is a 560-amino-acid chain: Arginine--tRNA ligase (560 aa).

Positions 122 to 132 (ANPNGPLHVGH) match the 'HIGH' region motif.

It belongs to the class-I aminoacyl-tRNA synthetase family.

Its subcellular location is the cytoplasm. The enzyme catalyses tRNA(Arg) + L-arginine + ATP = L-arginyl-tRNA(Arg) + AMP + diphosphate. The sequence is that of Arginine--tRNA ligase from Methanosphaera stadtmanae (strain ATCC 43021 / DSM 3091 / JCM 11832 / MCB-3).